The chain runs to 141 residues: Small ribosomal subunit protein uS12 (141 aa).

The residue at position 102 (Asp102) is a 3-methylthioaspartic acid. Positions Gly115 to Lys141 are disordered.

It belongs to the universal ribosomal protein uS12 family. Part of the 30S ribosomal subunit. Contacts proteins S8 and S17. May interact with IF1 in the 30S initiation complex.

With S4 and S5 plays an important role in translational accuracy. Its function is as follows. Interacts with and stabilizes bases of the 16S rRNA that are involved in tRNA selection in the A site and with the mRNA backbone. Located at the interface of the 30S and 50S subunits, it traverses the body of the 30S subunit contacting proteins on the other side and probably holding the rRNA structure together. The combined cluster of proteins S8, S12 and S17 appears to hold together the shoulder and platform of the 30S subunit. The chain is Small ribosomal subunit protein uS12 from Ureaplasma parvum serovar 3 (strain ATCC 27815 / 27 / NCTC 11736).